The primary structure comprises 674 residues: tRNA-guanine(15) transglycosylase (674 aa).

D90 (nucleophile) is an active-site residue. Positions 125 and 192 each coordinate substrate. Zn(2+) is bound by residues C275, C277, and C280. Positions H596–K671 constitute a PUA domain.

It belongs to the archaeosine tRNA-ribosyltransferase family. Requires Zn(2+) as cofactor.

The catalysed reaction is guanosine(15) in tRNA + 7-cyano-7-deazaguanine = 7-cyano-7-carbaguanosine(15) in tRNA + guanine. It participates in tRNA modification; archaeosine-tRNA biosynthesis. Exchanges the guanine residue with 7-cyano-7-deazaguanine (preQ0) at position 15 in the dihydrouridine loop (D-loop) of archaeal tRNAs. This is tRNA-guanine(15) transglycosylase from Methanosphaera stadtmanae (strain ATCC 43021 / DSM 3091 / JCM 11832 / MCB-3).